The primary structure comprises 525 residues: Keratin, type I cytoskeletal 24 (525 aa).

The tract at residues 1–30 is disordered; sequence MSCSSRASSSRAGGSSSARVSAGGSSFSSG. Positions 1–139 are head; the sequence is MSCSSRASSS…VGDGGLFSGG (139 aa). Residues 140-175 form a coil 1A region; that stretch reads EKQTMQNLNDRLANYLDKVRALEEANTDLENKIKEW. In terms of domain architecture, IF rod spans 140-456; it reads EKQTMQNLND…RLLDGEGGGS (317 aa). Residues 176 to 198 form a linker 1 region; the sequence is YDKYGPGSGDGGSGRDYSKYYSI. The interval 199–290 is coil 1B; that stretch reads IEDLRNQIIA…KNHEEEMKNM (92 aa). Residues 291-313 form a linker 12 region; that stretch reads QGSSGGEVTVEMNAAPGTDLTKL. The coil 2 stretch occupies residues 314–452; that stretch reads LNDMRAQYEE…ETYRRLLDGE (139 aa). A tail region spans residues 453–525; the sequence is GGGSSFAEFG…VSSISEVKVK (73 aa). Positions 459–497 are disordered; the sequence is AEFGGRNSGSVNMGSRDLVSGDSRSGSCSGQGRDSSKTR. Polar residues predominate over residues 480-491; the sequence is DSRSGSCSGQGR.

Belongs to the intermediate filament family. In terms of assembly, heterotetramer of two type I and two type II keratins. Highly expressed in keratinocytes, placenta, colon and spleen. Expressed at lower level in thymus and testis.

This chain is Keratin, type I cytoskeletal 24 (KRT24), found in Homo sapiens (Human).